The sequence spans 380 residues: UDP-N-acetylglucosamine 2-epimerase (380 aa).

It belongs to the UDP-N-acetylglucosamine 2-epimerase family.

The protein localises to the cytoplasm. The enzyme catalyses UDP-N-acetyl-alpha-D-glucosamine = UDP-N-acetyl-alpha-D-mannosamine. It participates in cell wall biogenesis; poly(glycerol phosphate) teichoic acid biosynthesis. Functionally, catalyzes the conversion of UDP-N-acetylglucosamine into UDP-N-acetylmannosamine, a precursor of the teichoic acid linkage unit. This Bacillus subtilis (strain 168) protein is UDP-N-acetylglucosamine 2-epimerase (mnaA).